Reading from the N-terminus, the 264-residue chain is Thymidylate synthase (264 aa).

Arg21 is a dUMP binding site. Position 51 (His51) interacts with (6R)-5,10-methylene-5,6,7,8-tetrahydrofolate. 126–127 (RR) contributes to the dUMP binding site. Cys146 (nucleophile) is an active-site residue. Residues 166 to 169 (RSCD), Asn177, and 207 to 209 (HLY) each bind dUMP. Asp169 contacts (6R)-5,10-methylene-5,6,7,8-tetrahydrofolate. Ala263 contributes to the (6R)-5,10-methylene-5,6,7,8-tetrahydrofolate binding site.

This sequence belongs to the thymidylate synthase family. Bacterial-type ThyA subfamily. Homodimer.

The protein localises to the cytoplasm. It catalyses the reaction dUMP + (6R)-5,10-methylene-5,6,7,8-tetrahydrofolate = 7,8-dihydrofolate + dTMP. It functions in the pathway pyrimidine metabolism; dTTP biosynthesis. Its function is as follows. Catalyzes the reductive methylation of 2'-deoxyuridine-5'-monophosphate (dUMP) to 2'-deoxythymidine-5'-monophosphate (dTMP) while utilizing 5,10-methylenetetrahydrofolate (mTHF) as the methyl donor and reductant in the reaction, yielding dihydrofolate (DHF) as a by-product. This enzymatic reaction provides an intracellular de novo source of dTMP, an essential precursor for DNA biosynthesis. This Salmonella paratyphi C (strain RKS4594) protein is Thymidylate synthase.